Reading from the N-terminus, the 774-residue chain is Ion-translocating oxidoreductase complex subunit C (774 aa).

2 4Fe-4S ferredoxin-type domains span residues 368–398 (ELTS…QQLQ) and 408–437 (KCEE…VQYY). 8 residues coordinate [4Fe-4S] cluster: C378, C381, C384, C388, C417, C420, C423, and C427. Residues 459-490 (ARFEEKKARMERDKAERENRFKQAAEDRRKEM) are compositionally biased toward basic and acidic residues. 2 disordered regions span residues 459-496 (ARFE…QGGS) and 533-774 (AKQA…EEKD). A compositionally biased stretch (low complexity) spans 533 to 545 (AKQAEAAQSGASE). The segment covering 550-572 (EMAKLREERKRQARERKAQKGEV) has biased composition (basic and acidic residues). The segment covering 605–618 (TESAAQPAQATPSS) has biased composition (low complexity). Composition is skewed to polar residues over residues 645-658 (TEST…TPSS), 686-698 (ESAA…TPSS), 725-738 (TESA…TPSS), and 762-774 (QQSS…EEKD).

The protein belongs to the 4Fe4S bacterial-type ferredoxin family. RnfC subfamily. As to quaternary structure, the complex is composed of six subunits: RnfA, RnfB, RnfC, RnfD, RnfE and RnfG. [4Fe-4S] cluster is required as a cofactor.

The protein resides in the cell inner membrane. Part of a membrane-bound complex that couples electron transfer with translocation of ions across the membrane. In Vibrio cholerae serotype O1 (strain ATCC 39315 / El Tor Inaba N16961), this protein is Ion-translocating oxidoreductase complex subunit C.